The following is a 205-amino-acid chain: Phosphoribosyl-dephospho-CoA transferase (205 aa).

Active-site residues include aspartate 134 and aspartate 136.

It belongs to the MdcG family.

The enzyme catalyses apo-[malonate decarboxylase ACP] + 2'-(5''-triphospho-alpha-D-ribosyl)-3'-dephospho-CoA = holo-[malonate decarboxylase ACP] + diphosphate. Functionally, transfers 2'-(5-triphosphoribosyl)-3'-dephosphocoenzyme-A to the apo-[acyl-carrier-protein] of the malonate decarboxylase to yield holo-[acyl-carrier-protein]. The chain is Phosphoribosyl-dephospho-CoA transferase from Klebsiella pneumoniae (strain 342).